The chain runs to 227 residues: 2-C-methyl-D-erythritol 4-phosphate cytidylyltransferase (227 aa).

The protein belongs to the IspD/TarI cytidylyltransferase family. IspD subfamily.

It carries out the reaction 2-C-methyl-D-erythritol 4-phosphate + CTP + H(+) = 4-CDP-2-C-methyl-D-erythritol + diphosphate. It participates in isoprenoid biosynthesis; isopentenyl diphosphate biosynthesis via DXP pathway; isopentenyl diphosphate from 1-deoxy-D-xylulose 5-phosphate: step 2/6. In terms of biological role, catalyzes the formation of 4-diphosphocytidyl-2-C-methyl-D-erythritol from CTP and 2-C-methyl-D-erythritol 4-phosphate (MEP). This chain is 2-C-methyl-D-erythritol 4-phosphate cytidylyltransferase, found in Mycobacterium marinum (strain ATCC BAA-535 / M).